The chain runs to 348 residues: Tetraacyldisaccharide 4'-kinase (348 aa).

54-61 provides a ligand contact to ATP; the sequence is TVGGAGKT.

Belongs to the LpxK family.

It carries out the reaction a lipid A disaccharide + ATP = a lipid IVA + ADP + H(+). It participates in glycolipid biosynthesis; lipid IV(A) biosynthesis; lipid IV(A) from (3R)-3-hydroxytetradecanoyl-[acyl-carrier-protein] and UDP-N-acetyl-alpha-D-glucosamine: step 6/6. Transfers the gamma-phosphate of ATP to the 4'-position of a tetraacyldisaccharide 1-phosphate intermediate (termed DS-1-P) to form tetraacyldisaccharide 1,4'-bis-phosphate (lipid IVA). The chain is Tetraacyldisaccharide 4'-kinase from Agrobacterium fabrum (strain C58 / ATCC 33970) (Agrobacterium tumefaciens (strain C58)).